A 118-amino-acid chain; its full sequence is Group 1 truncated hemoglobin GlbN (118 aa).

His-70 lines the heme pocket.

It belongs to the truncated hemoglobin family. Group I subfamily. In terms of assembly, monomer. Requires heme as cofactor.

It localises to the membrane. The sequence is that of Group 1 truncated hemoglobin GlbN (glbN) from Nostoc sp. (strain MUN 8820).